A 101-amino-acid chain; its full sequence is Small ribosomal subunit protein uS14 (101 aa).

The disordered stretch occupies residues 1–26 (MAKVSSIQKNKSRQKKSQSLHNKRSE). The segment covering 10 to 22 (NKSRQKKSQSLHN) has biased composition (basic residues).

It belongs to the universal ribosomal protein uS14 family. Part of the 30S ribosomal subunit. Contacts proteins S3 and S10.

In terms of biological role, binds 16S rRNA, required for the assembly of 30S particles and may also be responsible for determining the conformation of the 16S rRNA at the A site. The polypeptide is Small ribosomal subunit protein uS14 (Rickettsia prowazekii (strain Madrid E)).